The sequence spans 714 residues: Polynucleotide 5'-hydroxyl-kinase NOL9 (714 aa).

The residue at position 2 (Ala2) is an N-acetylalanine. Positions 31–47 match the Nucleolar localization signal motif; that stretch reads RRGRRRFGVLTRVELRR. A disordered region spans residues 80-133; the sequence is ARSRPAPRSPPTPSVPPAPCTASATCSLLNPRNHSTPQSRAGRPVRKVSPNVTQ. Residues 86–98 are compositionally biased toward pro residues; it reads PRSPPTPSVPPAP. Residues 107 to 118 are compositionally biased toward polar residues; the sequence is LLNPRNHSTPQS. Ser128 carries the post-translational modification Phosphoserine. 322–329 contributes to the ATP binding site; the sequence is GACDIGKS. The interval 495 to 714 is interaction with LAS1L; it reads FTYEEKESSP…PRHKLRQRRK (220 aa). A Glycyl lysine isopeptide (Lys-Gly) (interchain with G-Cter in SUMO2) cross-link involves residue Lys500. Ser502 bears the Phosphoserine mark.

The protein belongs to the Clp1 family. NOL9/GRC3 subfamily. Interacts with PELP1, WDR18 and SENP3. Interacts with LAS1L to form an ITS2 pre-rRNA endonuclease-kinase complex.

The protein resides in the nucleus. The protein localises to the nucleolus. The catalysed reaction is a 5'-end dephospho-2'-deoxyribonucleoside-DNA + ATP = a 5'-end 5'-phospho-2'-deoxyribonucleoside-DNA + ADP + H(+). It carries out the reaction a 5'-end dephospho-ribonucleoside-RNA + ATP = a 5'-end 5'-phospho-ribonucleoside-RNA + ADP + H(+). Polynucleotide kinase that can phosphorylate the 5'-hydroxyl groups of single-stranded and double-stranded RNA and DNA substrates. Involved in rRNA processing and its kinase activity is required for the processing of the 32S precursor into 5.8S and 28S rRNAs, more specifically for the generation of the major 5.8S(S) form. Required for the efficient pre-rRNA processing of internal transcribed spacer 2 (ITS2). Associates with LAS1L to form an ITS2 pre-rRNA endonuclease-kinase complex and is responsible for the transport of this complex into the nucleolus. This Mus musculus (Mouse) protein is Polynucleotide 5'-hydroxyl-kinase NOL9.